We begin with the raw amino-acid sequence, 451 residues long: Penicillin-binding protein 4* (451 aa).

The active-site Acyl-ester intermediate is Ser-61.

It belongs to the beta-lactamase family.

Its subcellular location is the forespore outer membrane. The protein operates within cell wall biogenesis; peptidoglycan biosynthesis. In terms of biological role, probably involved in peptidoglycan modification during cortex synthesis. This is Penicillin-binding protein 4* (pbpE) from Bacillus subtilis (strain 168).